We begin with the raw amino-acid sequence, 461 residues long: Photosystem II CP43 reaction center protein (461 aa).

The propeptide occupies 1–2; it reads ME. Position 3 is an N-acetylthreonine (T3). The residue at position 3 (T3) is a Phosphothreonine. Transmembrane regions (helical) follow at residues 57 to 81, 122 to 143, 166 to 188, 243 to 263, and 279 to 300; these read LFEVAHFVPEKPMYEQGLILLPHLA, LIGPETLEESFPFFGYVWKDKN, KAMYFGGVYDTWAPGGGDVRVIT, KPFAWARRALVWSGEAYLSYS, and WFNNTAYPSEFYGPTGPEASQA. E355 contributes to the [CaMn4O5] cluster binding site. The chain crosses the membrane as a helical span at residues 435–459; it reads RARAAAAGFEKGIERETEPALSMKP.

Belongs to the PsbB/PsbC family. PsbC subfamily. In terms of assembly, PSII is composed of 1 copy each of membrane proteins PsbA, PsbB, PsbC, PsbD, PsbE, PsbF, PsbH, PsbI, PsbJ, PsbK, PsbL, PsbM, PsbT, PsbX, PsbY, PsbZ, Psb30/Ycf12, at least 3 peripheral proteins of the oxygen-evolving complex and a large number of cofactors. It forms dimeric complexes. Binds multiple chlorophylls and provides some of the ligands for the Ca-4Mn-5O cluster of the oxygen-evolving complex. It may also provide a ligand for a Cl- that is required for oxygen evolution. PSII binds additional chlorophylls, carotenoids and specific lipids. serves as cofactor.

The protein localises to the plastid. Its subcellular location is the chloroplast thylakoid membrane. In terms of biological role, one of the components of the core complex of photosystem II (PSII). It binds chlorophyll and helps catalyze the primary light-induced photochemical processes of PSII. PSII is a light-driven water:plastoquinone oxidoreductase, using light energy to abstract electrons from H(2)O, generating O(2) and a proton gradient subsequently used for ATP formation. This chain is Photosystem II CP43 reaction center protein, found in Chlorokybus atmophyticus (Soil alga).